Consider the following 288-residue polypeptide: uncharacterized protein (288 aa).

Residues 6-20 (GFIG…MASH) and Thr97 each bind NAD(+). Residue Lys172 is part of the active site. Residue Lys240 participates in NAD(+) binding.

This sequence belongs to the HIBADH-related family.

It localises to the cell membrane. It is found in the membrane raft. This is an uncharacterized protein from Bacillus subtilis (strain 168).